Consider the following 1801-residue polypeptide: Laminin subunit beta-2 (1801 aa).

The signal sequence occupies residues 1–35; it reads MEWASGKPGRGRQGQPVPWELRLGLLLSVLAATLA. In terms of domain architecture, Laminin N-terminal spans 46–285; it reads SRGSCYPATG…ALYELVIRGN (240 aa). Asparagine 251 is a glycosylation site (N-linked (GlcNAc...) asparagine). Intrachain disulfides connect cysteine 286-cysteine 295, cysteine 288-cysteine 313, cysteine 315-cysteine 324, cysteine 327-cysteine 347, cysteine 350-cysteine 359, cysteine 352-cysteine 377, cysteine 380-cysteine 389, cysteine 392-cysteine 410, cysteine 413-cysteine 426, cysteine 415-cysteine 441, cysteine 443-cysteine 452, cysteine 455-cysteine 470, cysteine 473-cysteine 487, cysteine 475-cysteine 494, cysteine 496-cysteine 505, cysteine 508-cysteine 522, cysteine 525-cysteine 537, cysteine 527-cysteine 544, and cysteine 546-cysteine 555. Laminin EGF-like domains lie at 286 to 349, 350 to 412, 413 to 472, and 473 to 524; these read CFCY…ACRK, CECN…ACRP, CDCD…GCQR, and CQCN…GCRP. N-linked (GlcNAc...) asparagine glycosylation is present at asparagine 371. In terms of domain architecture, Laminin EGF-like 5; truncated spans 525 to 555; the sequence is CDCDVGGALDPQCDEATGQCPCRPHMIGRRC. Residues 564 to 780 form the Laminin IV type B domain; the sequence is RPFLDHLTWE…LLISASSLVY (217 aa). Intrachain disulfides connect cysteine 786–cysteine 798, cysteine 788–cysteine 805, cysteine 807–cysteine 816, cysteine 819–cysteine 831, cysteine 834–cysteine 846, cysteine 836–cysteine 853, cysteine 855–cysteine 864, cysteine 867–cysteine 877, cysteine 880–cysteine 889, cysteine 882–cysteine 896, cysteine 899–cysteine 908, cysteine 911–cysteine 927, cysteine 930–cysteine 946, cysteine 932–cysteine 957, cysteine 959–cysteine 968, cysteine 971–cysteine 986, cysteine 989–cysteine 1003, cysteine 991–cysteine 1010, cysteine 1013–cysteine 1022, cysteine 1025–cysteine 1038, cysteine 1041–cysteine 1061, cysteine 1043–cysteine 1068, cysteine 1070–cysteine 1079, cysteine 1082–cysteine 1095, cysteine 1098–cysteine 1110, cysteine 1100–cysteine 1117, cysteine 1119–cysteine 1128, cysteine 1131–cysteine 1143, cysteine 1146–cysteine 1158, cysteine 1148–cysteine 1165, cysteine 1167–cysteine 1176, and cysteine 1179–cysteine 1190. Laminin EGF-like domains follow at residues 786 to 833, 834 to 879, 880 to 929, 930 to 988, 989 to 1040, 1041 to 1097, 1098 to 1145, and 1146 to 1192; these read CQCD…GCQA, CQCS…NCRP, CVCN…QCRP, CPCP…RCQL, CECS…SCHR, CTCN…GCQP, CACH…QCRA, and CDCD…ACHP. Residue asparagine 1088 is glycosylated (N-linked (GlcNAc...) asparagine). A domain II region spans residues 1193-1412; it reads CHACFGDWDR…LSLTGVNELV (220 aa). Asparagine 1252 carries an N-linked (GlcNAc...) asparagine glycan. Positions 1259–1306 form a coiled coil; that stretch reads AKLVEATEGLRHEIGKTTERLTQLEAELTDVQDENFNANHALSGLERD. 2 N-linked (GlcNAc...) asparagine glycosylation sites follow: asparagine 1311 and asparagine 1351. A domain alpha region spans residues 1413–1445; it reads CGAPGDAPCATSPCGGAGCRDEDGQPRCGGLGC. The interval 1446 to 1801 is domain I; sequence SGAAATADLA…LQVQIYNTCQ (356 aa). The stretch at 1475-1529 forms a coiled coil; that stretch reads GILSRVSETRRQAEEAQQRAQAALDKANASRGQVEQANQELRELIQNVKDFLSQE. The N-linked (GlcNAc...) asparagine glycan is linked to asparagine 1502. Serine 1535 is subject to Phosphoserine. Residues 1576-1793 are a coiled coil; it reads LAHTMGDVRR…RSVLQAINLQ (218 aa). Residues 1684–1694 show a composition bias toward low complexity; it reads ASTAEETAGSA. Residues 1684-1703 are disordered; the sequence is ASTAEETAGSAQSRAREAEK.

In terms of assembly, laminin is a complex glycoprotein, consisting of three different polypeptide chains (alpha, beta, gamma), which are bound to each other by disulfide bonds into a cross-shaped molecule comprising one long and three short arms with globules at each end. Beta-2 is a subunit of laminin-3 (laminin-121 or S-laminin), laminin-4 (laminin-221 or S-merosin), laminin-7 (laminin-321 or KS-laminin), laminin-9 (laminin-421), laminin-11 (laminin-521), laminin-14 (laminin-423) and laminin-15 (laminin-523). In terms of tissue distribution, found in the basement membranes (major component). S-laminin is concentrated in the synaptic cleft of the neuromuscular junction.

It localises to the secreted. Its subcellular location is the extracellular space. The protein localises to the extracellular matrix. The protein resides in the basement membrane. Functionally, binding to cells via a high affinity receptor, laminin is thought to mediate the attachment, migration and organization of cells into tissues during embryonic development by interacting with other extracellular matrix components. The protein is Laminin subunit beta-2 (Lamb2) of Rattus norvegicus (Rat).